We begin with the raw amino-acid sequence, 148 residues long: Copper transport protein ctr6 (148 aa).

Topologically, residues Met1–His33 are extracellular. Residues Ile34–Phe54 form a helical membrane-spanning segment. Topologically, residues Glu55–Tyr108 are cytoplasmic. A helical transmembrane segment spans residues Phe109–Ala129. Topologically, residues Ala130 to His148 are extracellular.

Belongs to the copper transporter (Ctr) (TC 1.A.56) family. SLC31A subfamily. As to quaternary structure, homotrimer.

The protein resides in the vacuole membrane. Mobilizes stored copper from the vacuole to the cytoplasm under conditions of copper limitation. This chain is Copper transport protein ctr6 (ctr6), found in Schizosaccharomyces pombe (strain 972 / ATCC 24843) (Fission yeast).